A 144-amino-acid polypeptide reads, in one-letter code: 3-hydroxyacyl-[acyl-carrier-protein] dehydratase FabZ (144 aa).

His-48 is a catalytic residue.

The protein belongs to the thioester dehydratase family. FabZ subfamily.

Its subcellular location is the cytoplasm. It catalyses the reaction a (3R)-hydroxyacyl-[ACP] = a (2E)-enoyl-[ACP] + H2O. In terms of biological role, involved in unsaturated fatty acids biosynthesis. Catalyzes the dehydration of short chain beta-hydroxyacyl-ACPs and long chain saturated and unsaturated beta-hydroxyacyl-ACPs. In Bacillus pumilus (strain SAFR-032), this protein is 3-hydroxyacyl-[acyl-carrier-protein] dehydratase FabZ.